Here is an 803-residue protein sequence, read N- to C-terminus: Phenylalanine--tRNA ligase beta subunit (803 aa).

The 112-residue stretch at alanine 39–alanine 150 folds into the tRNA-binding domain. A B5 domain is found at alanine 400–leucine 475. Residues aspartate 453, aspartate 459, glutamate 462, and glutamate 463 each coordinate Mg(2+). One can recognise an FDX-ACB domain in the interval serine 709–arginine 802.

It belongs to the phenylalanyl-tRNA synthetase beta subunit family. Type 1 subfamily. Tetramer of two alpha and two beta subunits. Mg(2+) serves as cofactor.

The protein localises to the cytoplasm. The enzyme catalyses tRNA(Phe) + L-phenylalanine + ATP = L-phenylalanyl-tRNA(Phe) + AMP + diphosphate + H(+). The polypeptide is Phenylalanine--tRNA ligase beta subunit (Rhodopseudomonas palustris (strain ATCC BAA-98 / CGA009)).